The following is a 440-amino-acid chain: Chromosome partition protein MukF (440 aa).

The interval 208–236 (LSETSGTLRELQDTLEAAGDKLQANLLQI) is leucine-zipper.

This sequence belongs to the MukF family. Interacts, and probably forms a ternary complex, with MukE and MukB via its C-terminal region. The complex formation is stimulated by calcium or magnesium. It is required for an interaction between MukE and MukB.

The protein resides in the cytoplasm. It localises to the nucleoid. In terms of biological role, involved in chromosome condensation, segregation and cell cycle progression. May participate in facilitating chromosome segregation by condensation DNA from both sides of a centrally located replisome during cell division. Not required for mini-F plasmid partitioning. Probably acts via its interaction with MukB and MukE. Overexpression results in anucleate cells. It has a calcium binding activity. The protein is Chromosome partition protein MukF of Cronobacter sakazakii (strain ATCC BAA-894) (Enterobacter sakazakii).